A 377-amino-acid polypeptide reads, in one-letter code: Sterol 24-C-methyltransferase erg6 (377 aa).

Belongs to the class I-like SAM-binding methyltransferase superfamily. Erg6/SMT family.

It localises to the microsome. Its subcellular location is the mitochondrion. The enzyme catalyses lanosterol + S-adenosyl-L-methionine = eburicol + S-adenosyl-L-homocysteine + H(+). It participates in steroid metabolism; ergosterol biosynthesis. Specific and total activity is decreased in presence of alpha-bisabolol. Functionally, sterol 24-C-methyltransferase; part of the third module of ergosterol biosynthesis pathway that includes the late steps of the pathway. Methylates lanosterol at C-24 to produce eburicol. The third module or late pathway involves the ergosterol synthesis itself through consecutive reactions that mainly occur in the endoplasmic reticulum (ER) membrane. Firstly, the squalene synthase erg9 catalyzes the condensation of 2 farnesyl pyrophosphate moieties to form squalene, which is the precursor of all steroids. Squalene synthase is crucial for balancing the incorporation of farnesyl diphosphate (FPP) into sterol and nonsterol isoprene synthesis. Secondly, squalene is converted into lanosterol by the consecutive action of the squalene epoxidase erg1 and the lanosterol synthase erg7. Then, the delta(24)-sterol C-methyltransferase erg6 methylates lanosterol at C-24 to produce eburicol. Eburicol is the substrate of the sterol 14-alpha demethylase encoded by cyp51A and cyp51B, to yield 4,4,24-trimethyl ergosta-8,14,24(28)-trienol. The C-14 reductase erg24 then reduces the C14=C15 double bond which leads to 4,4-dimethylfecosterol. A sequence of further demethylations at C-4, involving the C-4 demethylation complex containing the C-4 methylsterol oxidases erg25A or erg25B, the sterol-4-alpha-carboxylate 3-dehydrogenase erg26 and the 3-keto-steroid reductase erg27, leads to the production of fecosterol via 4-methylfecosterol. The C-8 sterol isomerase erg2 then catalyzes the reaction which results in unsaturation at C-7 in the B ring of sterols and thus converts fecosterol to episterol. The sterol-C5-desaturase erg3B then catalyzes the introduction of a C-5 double bond in the B ring to produce 5-dehydroepisterol. The 2 other sterol-C5-desaturases, erg3A and erg3C, seem to be less important in ergosterol biosynthesis. The C-22 sterol desaturase erg5 further converts 5-dehydroepisterol into ergosta-5,7,22,24(28)-tetraen-3beta-ol by forming the C-22(23) double bond in the sterol side chain. Finally, ergosta-5,7,22,24(28)-tetraen-3beta-ol is substrate of the C-24(28) sterol reductases erg4A and erg4B to produce ergosterol. Possible alternative sterol biosynthetic pathways might exist from fecosterol to ergosterol, depending on the activities of the erg3 isoforms. The protein is Sterol 24-C-methyltransferase erg6 of Aspergillus fumigatus (strain ATCC MYA-4609 / CBS 101355 / FGSC A1100 / Af293) (Neosartorya fumigata).